The sequence spans 627 residues: Carene synthase, chloroplastic (627 aa).

The transit peptide at methionine 1–valine 36 directs the protein to the chloroplast. Residues aspartate 378, aspartate 382, and aspartate 530 each coordinate Mg(2+). The DDXXD motif signature appears at aspartate 378–aspartate 382.

This sequence belongs to the terpene synthase family. Tpsd subfamily. Requires Mg(2+) as cofactor. The cofactor is Mn(2+).

Its subcellular location is the plastid. It localises to the chloroplast. It catalyses the reaction (2E)-geranyl diphosphate = (+)-car-3-ene + diphosphate. It functions in the pathway terpene metabolism; oleoresin biosynthesis. Its function is as follows. Terpene synthase (TPS) involved in defensive oleoresin formation in conifers in response to insect attack or other injury. The polypeptide is Carene synthase, chloroplastic (3CAR) (Picea glauca (White spruce)).